A 148-amino-acid polypeptide reads, in one-letter code: MNITQVKIKKLENFSGSLPEYATEHSAGMDLIAANEQPITIKAGEIQLIPTGIAIALPYSFEAQIRPRSGLAVKHGITVANSPGTIDADYRGEIKVILINLGTQDFVIEKGMRIAQIIISKYERILWEESSILTETMRGSGGFGSTGV.

Substrate contacts are provided by residues 68 to 70, asparagine 81, 85 to 87, and lysine 95; these read RSG and TID.

Belongs to the dUTPase family. Mg(2+) is required as a cofactor.

The enzyme catalyses dUTP + H2O = dUMP + diphosphate + H(+). It participates in pyrimidine metabolism; dUMP biosynthesis; dUMP from dCTP (dUTP route): step 2/2. This enzyme is involved in nucleotide metabolism: it produces dUMP, the immediate precursor of thymidine nucleotides and it decreases the intracellular concentration of dUTP so that uracil cannot be incorporated into DNA. In Rickettsia akari (strain Hartford), this protein is Deoxyuridine 5'-triphosphate nucleotidohydrolase.